The chain runs to 117 residues: uncharacterized protein (117 aa).

The protein to H.influenzae HI_1162 and to HI_0925.

This is an uncharacterized protein from Escherichia coli (strain K12).